The primary structure comprises 515 residues: Anthranilate synthase component 1 (515 aa).

L-tryptophan-binding positions include Ser50 and 281–283; that span reads PYM. 316–317 serves as a coordination point for chorismate; it reads GT. Residue Glu343 participates in Mg(2+) binding. Residues Tyr431, Arg451, 465 to 467, and Gly467 each bind chorismate; that span reads GAG. Residue Glu480 coordinates Mg(2+).

It belongs to the anthranilate synthase component I family. In terms of assembly, heterotetramer consisting of two non-identical subunits: a beta subunit (TrpG) and a large alpha subunit (TrpE). Mg(2+) is required as a cofactor.

The enzyme catalyses chorismate + L-glutamine = anthranilate + pyruvate + L-glutamate + H(+). It participates in amino-acid biosynthesis; L-tryptophan biosynthesis; L-tryptophan from chorismate: step 1/5. Feedback inhibited by tryptophan. In terms of biological role, part of a heterotetrameric complex that catalyzes the two-step biosynthesis of anthranilate, an intermediate in the biosynthesis of L-tryptophan. In the first step, the glutamine-binding beta subunit (TrpG) of anthranilate synthase (AS) provides the glutamine amidotransferase activity which generates ammonia as a substrate that, along with chorismate, is used in the second step, catalyzed by the large alpha subunit of AS (TrpE) to produce anthranilate. In the absence of TrpG, TrpE can synthesize anthranilate directly from chorismate and high concentrations of ammonia. The chain is Anthranilate synthase component 1 (trpE) from Bacillus subtilis (strain 168).